A 153-amino-acid polypeptide reads, in one-letter code: Ribosomal RNA large subunit methyltransferase H (153 aa).

Positions 71 and 102 each coordinate S-adenosyl-L-methionine.

This sequence belongs to the RNA methyltransferase RlmH family. As to quaternary structure, homodimer.

The protein localises to the cytoplasm. The catalysed reaction is pseudouridine(1915) in 23S rRNA + S-adenosyl-L-methionine = N(3)-methylpseudouridine(1915) in 23S rRNA + S-adenosyl-L-homocysteine + H(+). In terms of biological role, specifically methylates the pseudouridine at position 1915 (m3Psi1915) in 23S rRNA. The chain is Ribosomal RNA large subunit methyltransferase H from Anaeromyxobacter dehalogenans (strain 2CP-C).